The sequence spans 211 residues: Uracil phosphoribosyltransferase (211 aa).

Residues arginine 77, arginine 102, and 129–137 (DPMLATGGS) contribute to the 5-phospho-alpha-D-ribose 1-diphosphate site. Uracil is bound by residues isoleucine 192 and 197 to 199 (GDA). Aspartate 198 lines the 5-phospho-alpha-D-ribose 1-diphosphate pocket.

This sequence belongs to the UPRTase family. It depends on Mg(2+) as a cofactor.

The enzyme catalyses UMP + diphosphate = 5-phospho-alpha-D-ribose 1-diphosphate + uracil. The protein operates within pyrimidine metabolism; UMP biosynthesis via salvage pathway; UMP from uracil: step 1/1. Its activity is regulated as follows. Allosterically activated by GTP. In terms of biological role, catalyzes the conversion of uracil and 5-phospho-alpha-D-ribose 1-diphosphate (PRPP) to UMP and diphosphate. The protein is Uracil phosphoribosyltransferase of Corynebacterium diphtheriae (strain ATCC 700971 / NCTC 13129 / Biotype gravis).